The following is a 1439-amino-acid chain: MDFSFSFMQGIMGNTIQQPPQLIDSANIRQEDAFDNHSDIVEDGGPTPFEATLQQGFQYPPTTEDLPPLTNGYPPSISLYETQTKYPPYNQYPNGSANGFGAVRNFSPTDYYHSEIPNTRPHEILEKPSPPQPPPPPSVPQTVIPKKTGSPEIKLKITKTIQNGRELFESSLCGDLLNEVQASEHTKSKHESRKEKRKKSNRHESSRSEERRSHKIPKLEPEGQNRPNERVDTAPEKPREEPVLKEAIPVQPILSSVPTTETSTGVKFQVGDLVWSKVGTYPWWPCMVSSDPQLEVHSKINTRGAREYHVQFFSNQPERAWVHEKRVREYKGHEQYEELLAEAAKQASNHSEKQKIRKPRPQRERAQWDIGIAHAEKALKMTREERVEQYTFIYIDKQPEEASSQAKKNVTSKTEVKKPRRPRSVLNSQPEQTNAGEVASSQSSTDLRRQSQRRHTSLEEEEPPPVKIAWKTAAARKSLPASITMHKGSLDLQKCNMSPVVKIEQVFALQNATGDGKFIDQFVYSTKGIGNKTEISVRGQDRLIISSPSQRSEKPAQSASSPEATSGSAGPVEKKQQRRSIRTRSESEKSAEVVPKKKIKKEQVETAPQASLKTGLQKGASEISDSCKPLKKRSRASTDVETASCTYRDTSDSDSRGLSDGQVGFGKQVDSPSATADADASDAQSVDSSLSRRGVGTSKKDTVCQVCEKAGDCLVACEGECCRHFHVECLGLTAVPEGHFTCEECETGQHPCFSCKVSGKDVKRCSVSVCGKFYHEACVRKFPTAIFESKGFRCPQHCCSSCSMEKDIHKASKGRMMRCLRCPVAYHVGDACVAAGSVSVSSHILICSNHSKRSSQSAAINVGFCFVCARGLIVQDHSDPMFSSYAYKSHYLLSESNRAELMKLPMIPSSSASKKRCEKGGRLLCCESCPASFHPECLSIDMPEGCWNCNDCKAGKKLHYKQIVWVKLGNYRQVLWWPAEICSPRSVPLNIQGLKHDLGDFPVFFFGSHDYYWVHQGRVFPYVEGDKHFAEGQTSINKTFKKALEEAAKRFQELKAQRESKEALEMERTSRKPPPYKHIKANKVIGKVQVQVADLSEIPRCNCKPGDENPCGLESQCLNRMSQYECHPQVCPAGDRCQNQCFTKRLYPDAEVIKTERRGWGLRTKRSIKKGEFVNEYVGELIDEEECRLRIKRAHENSVTNFYMLTVTKDRIIDAGPKGNYSRFMNHSCNPNCETQKWTVNGDVRVGLFALCDIPAGMELTFNYNLDCLGNGRTVCHCGADNCSGFLGVRPKSACTSAVDEKTKNAKLKKRRKVKAEAKPIHEDYCFQCGDGGELVMCDKKDCPKAYHLLCLNLTQPPHGKWECPWHRCDECGSVAVSFCEFCPHSFCKAHGKGALVPSALEGRLCCSSHDPASPVSPEYWSKIRCKWESQDSGEEVKE.

The interval 121–151 (PHEILEKPSPPQPPPPPSVPQTVIPKKTGSP) is disordered. Residues 128–139 (PSPPQPPPPPSV) show a composition bias toward pro residues. Residue Ser150 is modified to Phosphoserine. The short motif at 154-157 (KLKI) is the KIKL element. The disordered stretch occupies residues 181-247 (QASEHTKSKH…PREEPVLKEA (67 aa)). A compositionally biased stretch (basic residues) spans 187–201 (KSKHESRKEKRKKSN). Residues 202-244 (RHESSRSEERRSHKIPKLEPEGQNRPNERVDTAPEKPREEPVL) show a composition bias toward basic and acidic residues. Glycyl lysine isopeptide (Lys-Gly) (interchain with G-Cter in SUMO2) cross-links involve residues Lys218 and Lys245. One can recognise a PWWP 1 domain in the interval 270–333 (VGDLVWSKVG…EKRVREYKGH (64 aa)). Disordered regions lie at residues 344 to 367 (AKQA…ERAQ) and 401 to 466 (EASS…PPPV). 2 stretches are compositionally biased toward polar residues: residues 401–413 (EASS…VTSK) and 425–445 (VLNS…QSST). Residue Lys413 forms a Glycyl lysine isopeptide (Lys-Gly) (interchain with G-Cter in SUMO2) linkage. The residue at position 457 (Ser457) is a Phosphoserine. Residues Lys502 and Lys532 each participate in a glycyl lysine isopeptide (Lys-Gly) (interchain with G-Cter in SUMO2) cross-link. The segment at 540-695 (QDRLIISSPS…VDSSLSRRGV (156 aa)) is disordered. The segment covering 546–568 (SSPSQRSEKPAQSASSPEATSGS) has biased composition (polar residues). Basic and acidic residues predominate over residues 583 to 595 (TRSESEKSAEVVP). Residues Ser585, Ser587, and Ser590 each carry the phosphoserine modification. Lys628 participates in a covalent cross-link: Glycyl lysine isopeptide (Lys-Gly) (interchain with G-Cter in SUMO2). Positions 637–648 (STDVETASCTYR) are enriched in polar residues. Residue Ser655 is modified to Phosphoserine. Positions 670-691 (DSPSATADADASDAQSVDSSLS) are enriched in low complexity. PHD-type zinc fingers lie at residues 701 to 748 (DTVC…CETG), 749 to 805 (QHPC…CSME), and 862 to 955 (VGFC…CKAG). Lys790 bears the N6-acetyllysine mark. The PWWP 2 domain maps to 960-1025 (YKQIVWVKLG…QGRVFPYVEG (66 aa)). Positions 1036–1065 (INKTFKKALEEAAKRFQELKAQRESKEALE) form a coiled coil. The 51-residue stretch at 1096–1146 (SEIPRCNCKPGDENPCGLESQCLNRMSQYECHPQVCPAGDRCQNQCFTKRL) folds into the AWS domain. The 118-residue stretch at 1148-1265 (PDAEVIKTER…AGMELTFNYN (118 aa)) folds into the SET domain. Residue Lys1154 forms a Glycyl lysine isopeptide (Lys-Gly) (interchain with G-Cter in SUMO2) linkage. Positions 1272-1288 (GRTVCHCGADNCSGFLG) constitute a Post-SET domain. Residues 1323–1370 (EDYCFQCGDGGELVMCDKKDCPKAYHLLCLNLTQPPHGKWECPWHRCD) form a PHD-type 4; atypical zinc finger.

It belongs to the class V-like SAM-binding methyltransferase superfamily. Histone-lysine methyltransferase family. SET2 subfamily. In terms of assembly, interacts with BRD4. Interacts (via KIKL motif) with BRD3 (via NET domain).

It localises to the nucleus. Its subcellular location is the chromosome. It carries out the reaction L-lysyl(4)-[histone H3] + 2 S-adenosyl-L-methionine = N(6),N(6)-dimethyl-L-lysyl(4)-[histone H3] + 2 S-adenosyl-L-homocysteine + 2 H(+). It catalyses the reaction L-lysyl(27)-[histone H3] + 2 S-adenosyl-L-methionine = N(6),N(6)-dimethyl-L-lysyl(27)-[histone H3] + 2 S-adenosyl-L-homocysteine + 2 H(+). Histone methyltransferase. Preferentially dimethylates 'Lys-4' and 'Lys-27' of histone H3 forming H3K4me2 and H3K27me2. H3 'Lys-4' methylation represents a specific tag for epigenetic transcriptional activation, while 'Lys-27' is a mark for transcriptional repression. The sequence is that of Histone-lysine N-methyltransferase NSD3 (Nsd3) from Mus musculus (Mouse).